The primary structure comprises 432 residues: Adenylosuccinate synthetase (432 aa).

Residues 13–19 and 41–43 each bind GTP; these read GDEGKGK and GHT. D14 functions as the Proton acceptor in the catalytic mechanism. 2 residues coordinate Mg(2+): D14 and G41. Residues 14 to 17, 39 to 42, T131, R145, Q226, T241, and R305 each bind IMP; these read DEGK and NAGH. H42 functions as the Proton donor in the catalytic mechanism. Position 301-307 (301-307) interacts with substrate; that stretch reads SVTGRAR. Residues R307, 333-335, and 416-418 each bind GTP; these read KLD and STG.

It belongs to the adenylosuccinate synthetase family. In terms of assembly, homodimer. Mg(2+) serves as cofactor.

It is found in the cytoplasm. It carries out the reaction IMP + L-aspartate + GTP = N(6)-(1,2-dicarboxyethyl)-AMP + GDP + phosphate + 2 H(+). It participates in purine metabolism; AMP biosynthesis via de novo pathway; AMP from IMP: step 1/2. Plays an important role in the de novo pathway of purine nucleotide biosynthesis. Catalyzes the first committed step in the biosynthesis of AMP from IMP. This Neisseria gonorrhoeae (strain ATCC 700825 / FA 1090) protein is Adenylosuccinate synthetase.